The primary structure comprises 227 residues: Interleukin-6 (227 aa).

A signal peptide spans 1–22 (MASISYLLAPLVLAAVLQPTAG). The interval 24–45 (PLDAPTESPAGETSGEEAETGS) is disordered. Cysteine 93 and cysteine 103 are disulfide-bonded.

Belongs to the IL-6 superfamily. As to quaternary structure, component of a hexamer of two molecules each of IL6, IL6R and IL6ST; first binds to IL6R to associate with the signaling subunit IL6ST. In terms of tissue distribution, after induction, highly expressed in spleen. Can also be expressed in kidney after incubation with PHA.

Its subcellular location is the secreted. Cytokine with a wide variety of biological functions in immunity, tissue regeneration, and metabolism. Binds to IL6R, then the complex associates to the signaling subunit IL6ST/gp130 to trigger the intracellular IL6-signaling pathway. The interaction with the membrane-bound IL6R and IL6ST stimulates 'classic signaling', whereas the binding of IL6 and soluble IL6R to IL6ST stimulates 'trans-signaling'. Alternatively, 'cluster signaling' occurs when membrane-bound IL6:IL6R complexes on transmitter cells activate IL6ST receptors on neighboring receiver cells. The protein is Interleukin-6 (il6) of Takifugu rubripes (Japanese pufferfish).